Consider the following 679-residue polypeptide: Glycine--tRNA ligase beta subunit (679 aa).

This sequence belongs to the class-II aminoacyl-tRNA synthetase family. Tetramer of two alpha and two beta subunits.

It is found in the cytoplasm. The enzyme catalyses tRNA(Gly) + glycine + ATP = glycyl-tRNA(Gly) + AMP + diphosphate. This is Glycine--tRNA ligase beta subunit from Streptococcus mutans serotype c (strain ATCC 700610 / UA159).